Consider the following 190-residue polypeptide: Probable nicotinate-nucleotide adenylyltransferase (190 aa).

The protein belongs to the NadD family.

The catalysed reaction is nicotinate beta-D-ribonucleotide + ATP + H(+) = deamido-NAD(+) + diphosphate. The protein operates within cofactor biosynthesis; NAD(+) biosynthesis; deamido-NAD(+) from nicotinate D-ribonucleotide: step 1/1. Functionally, catalyzes the reversible adenylation of nicotinate mononucleotide (NaMN) to nicotinic acid adenine dinucleotide (NaAD). The chain is Probable nicotinate-nucleotide adenylyltransferase from Myxococcus xanthus (strain DK1622).